Consider the following 570-residue polypeptide: Protein mom-5 (570 aa).

Positions Met-1–Ala-16 are cleaved as a signal peptide. Residues Asp-17 to Arg-230 are Extracellular-facing. Positions Ser-32–Lys-148 constitute an FZ domain. 5 cysteine pairs are disulfide-bonded: Cys-37–Cys-98, Cys-45–Cys-91, Cys-82–Cys-119, Cys-108–Cys-145, and Cys-112–Cys-136. Residue Asn-51 is glycosylated (N-linked (GlcNAc...) asparagine). Asn-149 carries an N-linked (GlcNAc...) asparagine glycan. The chain crosses the membrane as a helical span at residues Ile-231–Phe-251. The Cytoplasmic segment spans residues Leu-252–Pro-264. A helical membrane pass occupies residues Ile-265–Gly-285. Residues Glu-286–Tyr-319 lie on the Extracellular side of the membrane. The chain crosses the membrane as a helical span at residues Phe-320–Ala-340. Over Asn-341–Ser-348 the chain is Cytoplasmic. Residues Ile-349 to Val-369 traverse the membrane as a helical segment. Topologically, residues Thr-370–Ala-395 are extracellular. The helical transmembrane segment at Leu-396–Val-416 threads the bilayer. Residues Cys-417–Arg-449 lie on the Cytoplasmic side of the membrane. A helical transmembrane segment spans residues Ile-450–Tyr-470. Residues Gln-471 to Glu-515 lie on the Extracellular side of the membrane. The chain crosses the membrane as a helical span at residues Ile-516–Trp-536. Over Val-537–Arg-570 the chain is Cytoplasmic.

It belongs to the G-protein coupled receptor Fz/Smo family.

Its subcellular location is the cell membrane. The protein resides in the early endosome. Functionally, receptor for Wnt proteins. Most frizzled receptors are coupled to the beta-catenin canonical signaling pathway, which leads to the activation of disheveled proteins, inhibition of gsk-3 kinase, nuclear accumulation of beta-catenin and activation of Wnt target genes. A second signaling pathway involving PKC and calcium fluxes has been seen for some family members, but it is not yet clear if it represents a distinct pathway or if it can be integrated in the canonical pathway, as pkc seems to be required for Wnt-mediated inactivation of gsk-3 kinase. Both pathways seem to involve interactions with G-proteins. Required in embryonic development for the correct positioning and orientation of the mitotic spindles and division planes in blastomere cells. During early embryonic cell divisions, directs the asymmetric positioning of transcription factors such as pop-1 and dsh-2 in daughter cells in order to determine cell fate specification. Acts redundantly with other Wnt receptors such as lin-17 to control vulval precursor cell specification and also the polarity of different cell types including distal tip cells, seam cells, AVG interneurons and P-cells and their descendants. Plays a role in the migration of cell types including distal tip cells and the QR neuroblast descendants, QR.p and QR.pa during larval development. Negatively regulates the unc-6/Netrin receptors unc-5 and unc-40 to control distal tip cell polarity and migration. Acts through ced-5/DOCK180 and ced-10/Rac to control both distal tip cell migration and the phagocytic clearance of apoptotic cell corpses. Furthermore, it is also required for the migration and axon guidance of the different neuronal cell types including CAN, ALM, HSN and the two mechanosensory neurons AVM and PVM. Mediates Wnt receptor cfz-2 in directing ALM migration, but may also act redundantly with the Wnt receptors cfz-2 and mig-1 to direct the migration of other neuronal cell types including CAN and HSN. Mediates Wnt ligand egl-20 in the control of the anterior-posterior axon guidance of AVM and PVM neurons. The sequence is that of Protein mom-5 from Caenorhabditis elegans.